The following is a 484-amino-acid chain: Probable glycine dehydrogenase (decarboxylating) subunit 2 (484 aa).

Position 264 is an N6-(pyridoxal phosphate)lysine (Lys-264).

Belongs to the GcvP family. C-terminal subunit subfamily. In terms of assembly, the glycine cleavage system is composed of four proteins: P, T, L and H. In this organism, the P 'protein' is a heterodimer of two subunits. Pyridoxal 5'-phosphate is required as a cofactor.

It catalyses the reaction N(6)-[(R)-lipoyl]-L-lysyl-[glycine-cleavage complex H protein] + glycine + H(+) = N(6)-[(R)-S(8)-aminomethyldihydrolipoyl]-L-lysyl-[glycine-cleavage complex H protein] + CO2. Its function is as follows. The glycine cleavage system catalyzes the degradation of glycine. The P protein binds the alpha-amino group of glycine through its pyridoxal phosphate cofactor; CO(2) is released and the remaining methylamine moiety is then transferred to the lipoamide cofactor of the H protein. In Legionella pneumophila (strain Corby), this protein is Probable glycine dehydrogenase (decarboxylating) subunit 2.